The following is a 325-amino-acid chain: MDMWTALLILQALLLPSLADGATPALRFVAVGDWGGVPNAPFHTAREMANAKEIARTVQILGADFILSLGDNFYFTGVQDINDKRFQETFEDVFSDRSLRKVPWYVLAGNHDHLGNVSAQIAYSKISKRWNFPSPFYRLHFKIPQTNVSVAIFMLDTVTLCGNSDDFLSQQPERPRDVKLARTQLSWLKKQLAAAREDYVLVAGHYPVWSIAEHGPTHCLVKQLRPLLATYGVTAYLCGHDHNLQYLQDENGVGYVLSGAGNFMDPSKRHQRKVPNGYLRFHYGTEDSLGGFAYVEISSKEMTVTYIEASGKSLFKTRLPRRARP.

Positions 1–21 (MDMWTALLILQALLLPSLADG) are cleaved as a signal peptide. The Fe cation site is built by Asp33, Asp71, Tyr74, and Asn110. N-linked (GlcNAc...) asparagine glycosylation is found at Asn116 and Asn147. Cys161 and Cys219 form a disulfide bridge. 3 residues coordinate Fe cation: His205, His240, and His242.

The protein belongs to the metallophosphoesterase superfamily. Purple acid phosphatase family. As to quaternary structure, exists either as monomer or, after proteolytic processing, as a dimer of two chains linked by disulfide bond(s). Fe cation is required as a cofactor.

The protein localises to the lysosome. The catalysed reaction is a phosphate monoester + H2O = an alcohol + phosphate. Functionally, involved in osteopontin/bone sialoprotein dephosphorylation. Its expression seems to increase in certain pathological states such as Gaucher and Hodgkin diseases, the hairy cell, the B-cell, and the T-cell leukemias. In Homo sapiens (Human), this protein is Tartrate-resistant acid phosphatase type 5 (ACP5).